We begin with the raw amino-acid sequence, 122 residues long: Immunoglobulin lambda variable 4-3 (122 aa).

The first 19 residues, 1-19 (MAWVSFYLLPFIFSTGLCA), serve as a signal peptide directing secretion. Residues 20 to 44 (LPVLTQPPSASALLGASIKLTCTLS) form a framework-1 region. The Ig-like domain maps to 21–122 (PVLTQPPSAS…ESHTIDGQVG (102 aa)). Cysteine 41 and cysteine 111 form a disulfide bridge. Positions 45–51 (SEHSTYT) are complementarity-determining-1. The framework-2 stretch occupies residues 52–68 (IEWYQQRPGRSPQYIMK). A complementarity-determining-2 region spans residues 69–75 (VKSDGSH). Residues 76–111 (SKGDGIPDRFMGSSSGADRYLTFSNLQSDDEAEYHC) form a framework-3 region. The interval 112 to 122 (GESHTIDGQVG) is complementarity-determining-3.

Immunoglobulins are composed of two identical heavy chains and two identical light chains; disulfide-linked.

It is found in the secreted. The protein localises to the cell membrane. In terms of biological role, v region of the variable domain of immunoglobulin light chains that participates in the antigen recognition. Immunoglobulins, also known as antibodies, are membrane-bound or secreted glycoproteins produced by B lymphocytes. In the recognition phase of humoral immunity, the membrane-bound immunoglobulins serve as receptors which, upon binding of a specific antigen, trigger the clonal expansion and differentiation of B lymphocytes into immunoglobulins-secreting plasma cells. Secreted immunoglobulins mediate the effector phase of humoral immunity, which results in the elimination of bound antigens. The antigen binding site is formed by the variable domain of one heavy chain, together with that of its associated light chain. Thus, each immunoglobulin has two antigen binding sites with remarkable affinity for a particular antigen. The variable domains are assembled by a process called V-(D)-J rearrangement and can then be subjected to somatic hypermutations which, after exposure to antigen and selection, allow affinity maturation for a particular antigen. This is Immunoglobulin lambda variable 4-3 from Homo sapiens (Human).